The sequence spans 750 residues: Photosystem I P700 chlorophyll a apoprotein A1 (750 aa).

The next 8 helical transmembrane spans lie at 70–93 (VFSA…FHGA), 156–179 (LYCT…FHYH), 195–219 (LNHH…HVSL), 291–309 (TAHH…GHMY), 346–369 (WHAQ…HHMY), 385–411 (LSLF…IFMV), 433–455 (AIIS…LYIH), and 531–549 (FLVH…LILL). [4Fe-4S] cluster is bound by residues Cys573 and Cys582. A run of 2 helical transmembrane segments spans residues 589–610 (HVFL…HFSW) and 664–686 (LSAY…MFLF). His675 lines the chlorophyll a' pocket. 2 residues coordinate chlorophyll a: Met683 and Tyr691. Trp692 contributes to the phylloquinone binding site. A helical membrane pass occupies residues 724–744 (AVGVAHYLLGGIATTWAFFLA).

The protein belongs to the PsaA/PsaB family. The PsaA/B heterodimer binds the P700 chlorophyll special pair and subsequent electron acceptors. PSI consists of a core antenna complex that captures photons, and an electron transfer chain that converts photonic excitation into a charge separation. The eukaryotic PSI reaction center is composed of at least 11 subunits. Requires P700 is a chlorophyll a/chlorophyll a' dimer, A0 is one or more chlorophyll a, A1 is one or both phylloquinones and FX is a shared 4Fe-4S iron-sulfur center. as cofactor.

It is found in the plastid. Its subcellular location is the chloroplast thylakoid membrane. The catalysed reaction is reduced [plastocyanin] + hnu + oxidized [2Fe-2S]-[ferredoxin] = oxidized [plastocyanin] + reduced [2Fe-2S]-[ferredoxin]. Its function is as follows. PsaA and PsaB bind P700, the primary electron donor of photosystem I (PSI), as well as the electron acceptors A0, A1 and FX. PSI is a plastocyanin-ferredoxin oxidoreductase, converting photonic excitation into a charge separation, which transfers an electron from the donor P700 chlorophyll pair to the spectroscopically characterized acceptors A0, A1, FX, FA and FB in turn. Oxidized P700 is reduced on the lumenal side of the thylakoid membrane by plastocyanin. This is Photosystem I P700 chlorophyll a apoprotein A1 from Angiopteris evecta (Mule's foot fern).